We begin with the raw amino-acid sequence, 785 residues long: 1-phosphatidylinositol 4,5-bisphosphate phosphodiesterase delta-3 (785 aa).

Residues 1 to 43 form a disordered region; sequence MLCGGWKRSRRSPEESRVSAQVAAPLAFPPSPASSDSSTKRPG. The region spanning 65-168 is the PH domain; sequence SRLLKIRSRT…WVRGLAKLRA (104 aa). A substrate binding region spans residues 69–97; it reads KIRSRTWHKERLYRLQEDGLSVWFQRRIP. At S101 the chain carries Phosphoserine. EF-hand domains are found at residues 178–213, 214–249, and 246–281; these read RLDH…VNVD, MNDM…LLKR, and LLKR…QGED. Positions 191, 193, 195, 197, 202, 227, 229, 231, 233, and 238 each coordinate Ca(2+). The PI-PLC X-box domain maps to 333–478; it reads QDMGQPLAHY…LKGRILVKGK (146 aa). Residue H348 is part of the active site. Ca(2+)-binding residues include N349, E378, and D380. H393 is a catalytic residue. Position 427 (E427) interacts with Ca(2+). 2 residues coordinate substrate: K476 and K478. Basic and acidic residues predominate over residues 484 to 493; the sequence is RSEDGRILSD. Residues 484–517 form a disordered region; sequence RSEDGRILSDREEEEEEEEEAEEALEAAEQRSRA. S492 is subject to Phosphoserine. Positions 494–509 are enriched in acidic residues; the sequence is REEEEEEEEEAEEALE. In terms of domain architecture, PI-PLC Y-box spans 524–640; that stretch reads LSALAVYCCA…GYVLKPAYLR (117 aa). Residue S553 coordinates substrate. At S569 the chain carries Phosphoserine. R580 contacts substrate. Residues 636-765 enclose the C2 domain; sequence PAYLRQLNTT…QGYRHIHLLS (130 aa). Ca(2+) is bound by residues I679, D681, N705, D734, Y735, and D736.

The cofactor is Ca(2+). In terms of tissue distribution, expressed in cerebellum and cerebral cortex.

Its subcellular location is the membrane. It is found in the cytoplasm. It localises to the cleavage furrow. It carries out the reaction a 1,2-diacyl-sn-glycero-3-phospho-(1D-myo-inositol-4,5-bisphosphate) + H2O = 1D-myo-inositol 1,4,5-trisphosphate + a 1,2-diacyl-sn-glycerol + H(+). With respect to regulation, strongly activated by phosphatidic acid. Inhibited by phosphatidylethanolamine (PtdEtn), phosphatidylcholine (PtdCho), sphingomyelin and phosphatidylserine (PtdSer). Its function is as follows. Hydrolyzes the phosphatidylinositol 4,5-bisphosphate (PIP2) to generate 2 second messenger molecules diacylglycerol (DAG) and inositol 1,4,5-trisphosphate (IP3). DAG mediates the activation of protein kinase C (PKC), while IP3 releases Ca(2+) from intracellular stores. Essential for trophoblast and placental development. May participate in cytokinesis by hydrolyzing PIP2 at the cleavage furrow. Regulates neurite outgrowth through the inhibition of RhoA/Rho kinase signaling. The protein is 1-phosphatidylinositol 4,5-bisphosphate phosphodiesterase delta-3 of Mus musculus (Mouse).